The primary structure comprises 156 residues: Ribosomal RNA large subunit methyltransferase H (156 aa).

Residues leucine 73, glycine 104, and 123–128 (VSSLTL) contribute to the S-adenosyl-L-methionine site.

This sequence belongs to the RNA methyltransferase RlmH family. In terms of assembly, homodimer.

The protein resides in the cytoplasm. The catalysed reaction is pseudouridine(1915) in 23S rRNA + S-adenosyl-L-methionine = N(3)-methylpseudouridine(1915) in 23S rRNA + S-adenosyl-L-homocysteine + H(+). Specifically methylates the pseudouridine at position 1915 (m3Psi1915) in 23S rRNA. This Burkholderia mallei (strain NCTC 10247) protein is Ribosomal RNA large subunit methyltransferase H.